Consider the following 961-residue polypeptide: Leucine-rich repeat-containing protein egg-6 (961 aa).

The signal sequence occupies residues 1-18; sequence MRWLTLIAVAHLIAFLSS. The Extracellular portion of the chain corresponds to 19-854; that stretch reads AEITCPRIPE…EQNERHRNIR (836 aa). LRR repeat units lie at residues 60 to 78, 79 to 101, 103 to 124, 125 to 148, 150 to 172, 174 to 197, 199 to 222, 223 to 245, 247 to 269, 270 to 294, 305 to 316, 317 to 339, 340 to 363, 364 to 387, 388 to 411, 413 to 435, and 437 to 455; these read IDELHILNGTDVKIESLPF, NGLRTIAILNSTLQSFSPTAWRH, EATIEHITINGNELKTVPVFGN, LSTLMSMNLNSNQISSIPDKAFNG, SALTQLRLENNAICDFPPKSLDA, KASLVLLDVSGNCLDAIPAQILRN, ANLMYLDLGSNNISEINNFELMNL, PFLRELRVQNNTLRRIHPMAFMN, PQLQYLYLQDNIISTLDGNRLQG, FKNLEVLDVSNNALYALPSLKDLPN, ITKIETLAFSNN, PNLQLISVQNNNIVQISRNSFES, LDKLVVLLVGNNSLAKIERGMFDG, MKNLQQLSIRNNTLTALDASSFAQ, LAHLTTLDLGHNKIHDIEEGTFDK, SKLFWLDLSNNKISGFKTSVFKK, and ISNILLDGNQLICDESFNE. The chain crosses the membrane as a helical span at residues 855-875; that stretch reads IITAIALAFVGAVTVVVIIFF. At 876–961 the chain is on the cytoplasmic side; the sequence is VNYTKKQRRL…PQAVSHRSRH (86 aa). The interval 890-943 is disordered; the sequence is VYRSSPSSSGSSGQNAANESGRSSAAPSPIRPPLMNIPKTPNNRTMESTFGQPQ. The span at 893–902 shows a compositional bias: low complexity; it reads SSPSSSGSSG. Residues 928-943 are compositionally biased toward polar residues; it reads KTPNNRTMESTFGQPQ.

In L1 larvae, expressed in a subset of epithelial cells including epidermal, vulval and rectal cells and the excretory duct and pore. Also detected in some neurons. Absent from internal epithelia such as the gut and pharyngeal tubes.

The protein localises to the apical cell membrane. Required for apical extracellular matrix organization and epithelial junction maintenance. In Caenorhabditis elegans, this protein is Leucine-rich repeat-containing protein egg-6.